The chain runs to 129 residues: Glycine cleavage system H protein (129 aa).

One can recognise a Lipoyl-binding domain in the interval 24–106 (TVVVGVTSYA…YGDGWLIKVR (83 aa)). The residue at position 65 (K65) is an N6-lipoyllysine.

This sequence belongs to the GcvH family. In terms of assembly, the glycine cleavage system is composed of four proteins: P, T, L and H. (R)-lipoate is required as a cofactor.

Its function is as follows. The glycine cleavage system catalyzes the degradation of glycine. The H protein shuttles the methylamine group of glycine from the P protein to the T protein. This Gloeobacter violaceus (strain ATCC 29082 / PCC 7421) protein is Glycine cleavage system H protein.